The sequence spans 419 residues: MFNRIISLFLLLFTGQVIALDLELTQGINSALPIAINSFGSNAAAQEIGNVIENDLTISGQFKIISGPQGANSQSSVSTLRQLGADSVVTGRVNQVGNRIEVSFTLADAVANGNILLTKTFQINANQVRALAHHISDEVYQKLTGERGIFSTRIAYISVQRNGGRSRYSLEVADADGHNPQSLLVSSEPIMSPSWSPNGKSISYVSFEKKKAEIFTVSVETGQRRLITSFPGINGAPAWSPDGQHLAVVLSKSGTPKIYDVDLSSGSMKQLTFGNSIDTEPRYSPDGRSLLFTSGRGGSPQVYRLSLADGQISRVTFEGNYNARASYTPDMKHIVMLHREDRQFNIGVQNTGGGPISNLTFSGLDESPSVSPNSRLVLYATRYQDRGVLGIVSIDGRIRMRLPAREGDVQEPAWSPYLS.

The signal sequence occupies residues 1–19 (MFNRIISLFLLLFTGQVIA).

Belongs to the TolB family. The Tol-Pal system is composed of five core proteins: the inner membrane proteins TolA, TolQ and TolR, the periplasmic protein TolB and the outer membrane protein Pal. They form a network linking the inner and outer membranes and the peptidoglycan layer.

It localises to the periplasm. In terms of biological role, part of the Tol-Pal system, which plays a role in outer membrane invagination during cell division and is important for maintaining outer membrane integrity. In Legionella pneumophila subsp. pneumophila (strain Philadelphia 1 / ATCC 33152 / DSM 7513), this protein is Tol-Pal system protein TolB.